The primary structure comprises 410 residues: MNQQLKNLTLPIYMDYQSTTPIDPRVMEAMLPYFTTKFGNPHSRSHSFGWEAENAVENARSMVAKVIGADSKEIIFTSGATESNNLVIKGIAKFYGNKKKHIITLVSEHKCVLNACRHLEQEGIKITYLPIKSNGIIDLETLKNAITDQTLLVSVMAVNNEIGVIQPLKEIGKICRERNVFFHSDIAQGFGKIPINVNECNIDLASISGHKIYGPKGIGALYIRKKPRVRVTPLINGGGQERGMRSGTLPTPLIVGLGIASEIAYNEMEKDTQHVNYLFDRFLNNIHSKISEVYLNGDKDQRYKGNLNLSFAGVEGESIILAIKDLAVSSGSACTSASLEPSYVLRSIGISEELAHTSIRFGIGRFTTEQEIDYAVNLVCSKIDKLRRLSPLWEMMQEGVDLKKIRWTAH.

Residues Ala80–Thr81, Asn160, Gln188, and Ser208–His210 contribute to the pyridoxal 5'-phosphate site. Position 211 is an N6-(pyridoxal phosphate)lysine (Lys211). Residue Thr248 coordinates pyridoxal 5'-phosphate. The Cysteine persulfide intermediate role is filled by Cys334. Position 334 (Cys334) interacts with [2Fe-2S] cluster.

The protein belongs to the class-V pyridoxal-phosphate-dependent aminotransferase family. NifS/IscS subfamily. In terms of assembly, homodimer. Forms a heterotetramer with IscU, interacts with other sulfur acceptors. The cofactor is pyridoxal 5'-phosphate.

Its subcellular location is the cytoplasm. The catalysed reaction is (sulfur carrier)-H + L-cysteine = (sulfur carrier)-SH + L-alanine. The protein operates within cofactor biosynthesis; iron-sulfur cluster biosynthesis. Functionally, master enzyme that delivers sulfur to a number of partners involved in Fe-S cluster assembly, tRNA modification or cofactor biosynthesis. Catalyzes the removal of elemental sulfur atoms from cysteine to produce alanine. Functions as a sulfur delivery protein for Fe-S cluster synthesis onto IscU, an Fe-S scaffold assembly protein, as well as other S acceptor proteins. The polypeptide is Cysteine desulfurase IscS (Rickettsia prowazekii (strain Madrid E)).